A 616-amino-acid chain; its full sequence is MKKYDCLVIGAGHAGLEAAFILAKKKYKVALFVLDKKLVGNMPCNPSIGGPAKGIVTREIDALGGMQAIAADNTQLQMKLLNSSKGAGTWALRAQIDKLEYSKWFLNRIEENEYIDLIDKEVNSIKFVNQKVCGVYTVDNQFFESNYLIVTTGTFLDSSIHIGHKVIKKGPDDFNGSYLLAKQIKELDFQTIRLKTGTPPRILKNSIDYSKLQIEPGTNKKYSFSHFDRKFLDFNKQEVCYLAFTNNKIHEIINNNLDKSAMYSGFITGTGPRYCPSIEDKVVRFNDKERHQLFVEPESKHLDTIYLGGLSSSLPEDVQEQIVKNIVGFENAVIKKYAYAIEYDAINPIQLYPTLETKKIKGLFFAGQINGTSGYEEAACQGLMAGINVLCQLENREPLVLKRNEAYIGVLIEDLINKEITDPYRLLTSRAEYRLELRNDNADQRLLKYGYELGLISQSHWDEYNKNLENFNNTLKELETSTLKNVKEFKYNSRKTNTTLYEILKRPDYSFIDMEPFLKNKNTLDEYWKDKVDIYIKYGGYIKSQQKIINDTKNIDNIKLSSISDYKDVPNISLEARDKLNKVKPLTLGQASRVSGINLVDLINIKLYLENKKKQT.

Residues 10 to 15, valine 122, and serine 177 contribute to the FAD site; that span reads GAGHAG. 271-285 contributes to the NAD(+) binding site; the sequence is GPRYCPSIEDKVVRF. Residue glutamine 368 coordinates FAD.

The protein belongs to the MnmG family. Homodimer. Heterotetramer of two MnmE and two MnmG subunits. Requires FAD as cofactor.

Its subcellular location is the cytoplasm. Functionally, NAD-binding protein involved in the addition of a carboxymethylaminomethyl (cmnm) group at the wobble position (U34) of certain tRNAs, forming tRNA-cmnm(5)s(2)U34. In Malacoplasma penetrans (strain HF-2) (Mycoplasma penetrans), this protein is tRNA uridine 5-carboxymethylaminomethyl modification enzyme MnmG.